A 374-amino-acid polypeptide reads, in one-letter code: N-acetyldiaminopimelate deacetylase (374 aa).

Asp-69 is a catalytic residue. Glu-128 acts as the Proton acceptor in catalysis.

Belongs to the peptidase M20A family. N-acetyldiaminopimelate deacetylase subfamily.

It carries out the reaction N-acetyl-(2S,6S)-2,6-diaminopimelate + H2O = (2S,6S)-2,6-diaminopimelate + acetate. It functions in the pathway amino-acid biosynthesis; L-lysine biosynthesis via DAP pathway; LL-2,6-diaminopimelate from (S)-tetrahydrodipicolinate (acetylase route): step 3/3. Catalyzes the conversion of N-acetyl-diaminopimelate to diaminopimelate and acetate. The protein is N-acetyldiaminopimelate deacetylase of Bacillus licheniformis (strain ATCC 14580 / DSM 13 / JCM 2505 / CCUG 7422 / NBRC 12200 / NCIMB 9375 / NCTC 10341 / NRRL NRS-1264 / Gibson 46).